The chain runs to 197 residues: Caspase recruitment domain-containing protein 16 (197 aa).

One can recognise a CARD domain in the interval 1–91 (MADKVLKEKR…YLAETLGLSA (91 aa)).

As to quaternary structure, homooligomer. Interacts with CASP1, CASP4, CARD8 and RIPK2. In terms of tissue distribution, widely expressed. Expressed at higher level in placenta, spleen, lymph node and bone marrow. Weakly or not expressed in thymus.

Functionally, caspase inhibitor. Acts as a regulator of procaspase-1/CASP1 activation implicated in the regulation of the proteolytic maturation of pro-interleukin-1 beta (IL1B) and its release during inflammation. Inhibits the release of IL1B in response to LPS in monocytes. Also induces NF-kappa-B activation during the pro-inflammatory cytokine response. Also able to inhibit CASP1-mediated neuronal cell death, TNF-alpha, hypoxia-, UV-, and staurosporine-mediated cell death but not ER stress-mediated cell death. Acts by preventing activation of caspases CASP1 and CASP4, possibly by preventing the interaction between CASP1 and RIPK2. The polypeptide is Caspase recruitment domain-containing protein 16 (CARD16) (Homo sapiens (Human)).